A 545-amino-acid chain; its full sequence is Thermosome subunit alpha (545 aa).

The protein belongs to the TCP-1 chaperonin family. In terms of assembly, forms a Heterooligomeric complex of two stacked eight-membered rings.

In terms of biological role, molecular chaperone; binds unfolded polypeptides in vitro, and has a weak ATPase activity. In Archaeoglobus fulgidus (strain ATCC 49558 / DSM 4304 / JCM 9628 / NBRC 100126 / VC-16), this protein is Thermosome subunit alpha (thsA).